A 186-amino-acid chain; its full sequence is Ribosome-recycling factor (186 aa).

The protein belongs to the RRF family.

It localises to the cytoplasm. Its function is as follows. Responsible for the release of ribosomes from messenger RNA at the termination of protein biosynthesis. May increase the efficiency of translation by recycling ribosomes from one round of translation to another. The polypeptide is Ribosome-recycling factor (Endomicrobium trichonymphae).